The chain runs to 103 residues: Small ribosomal subunit protein uS10 (103 aa).

The protein belongs to the universal ribosomal protein uS10 family. In terms of assembly, part of the 30S ribosomal subunit.

Its function is as follows. Involved in the binding of tRNA to the ribosomes. In Dechloromonas aromatica (strain RCB), this protein is Small ribosomal subunit protein uS10.